Here is a 1007-residue protein sequence, read N- to C-terminus: Sal-like protein 2 (1007 aa).

The interval methionine 1–proline 33 is disordered. The C2H2-type 1; atypical zinc-finger motif lies at glutamine 34–cysteine 56. Disordered regions lie at residues aspartate 59–serine 121, glycine 137–leucine 177, proline 220–serine 243, and proline 286–leucine 306. Residues glutamate 70 to glutamate 80 are compositionally biased toward low complexity. Polar residues predominate over residues proline 99–threonine 108. Residues proline 151–glycine 171 are compositionally biased toward pro residues. Serine 243 bears the Phosphoserine mark. 2 C2H2-type zinc fingers span residues histidine 373–histidine 395 and tyrosine 401–histidine 423. Disordered stretches follow at residues lysine 520 to alanine 540 and alanine 610 to glycine 629. 3 consecutive C2H2-type zinc fingers follow at residues asparagine 631 to histidine 653, phenylalanine 659 to histidine 681, and asparagine 691 to histidine 713. Residues leucine 714–threonine 886 are disordered. Residues glutamate 734–glycine 744 are compositionally biased toward polar residues. Low complexity predominate over residues serine 747–serine 757. Over residues proline 758–serine 782 the composition is skewed to acidic residues. Phosphoserine occurs at positions 797, 802, and 806. A compositionally biased stretch (acidic residues) spans glutamate 803–valine 812. Residues glycine 862–arginine 871 show a composition bias toward basic and acidic residues. Lysine 911 is covalently cross-linked (Glycyl lysine isopeptide (Lys-Gly) (interchain with G-Cter in ubiquitin)). 2 C2H2-type zinc fingers span residues lysine 911–histidine 933 and phenylalanine 940–histidine 963.

It belongs to the sal C2H2-type zinc-finger protein family. Highest levels in adult brain (in different areas). Lower levels in heart; very low levels in kidney and pancreas. Expressed throughout the retina and lens vesicle as well as the periocular mesenchyme.

It localises to the nucleus. In terms of biological role, probable transcription factor that plays a role in eye development before, during, and after optic fissure closure. In Homo sapiens (Human), this protein is Sal-like protein 2 (SALL2).